The sequence spans 314 residues: WD repeat domain-containing protein 83 (314 aa).

WD repeat units lie at residues 23 to 62, 65 to 104, 107 to 146, 151 to 188, 189 to 228, 231 to 272, and 275 to 313; these read CNQG…LLKT, GHGY…VVRK, GHAG…PDAI, EAKD…MCAD, YLGS…LLGE, GHQN…LVLK, and VGKA…EEGG.

It belongs to the WD repeat MORG1 family.

It is found in the cytoplasm. Molecular scaffold protein for various multimeric protein complexes. Acts as a module in the assembly of a multicomponent scaffold for the ERK pathway, linking ERK responses to specific agonists. Also involved in response to hypoxia by acting as a negative regulator of HIF1A/HIF-1-alpha. The chain is WD repeat domain-containing protein 83 (wdr83) from Xenopus laevis (African clawed frog).